The sequence spans 232 residues: RNA chaperone ProQ (232 aa).

Positions E105–D182 are disordered. Basic and acidic residues predominate over residues Q117 to R136. The span at R137–P146 shows a compositional bias: basic residues. The span at R147 to H177 shows a compositional bias: basic and acidic residues.

Belongs to the ProQ family.

The protein localises to the cytoplasm. RNA chaperone with significant RNA binding, RNA strand exchange and RNA duplexing activities. May regulate ProP activity through an RNA-based, post-transcriptional mechanism. The chain is RNA chaperone ProQ from Shigella flexneri serotype 5b (strain 8401).